Reading from the N-terminus, the 632-residue chain is POU domain, class 2, transcription factor 1 (632 aa).

Phosphothreonine is present on residues T157 and T163. The 75-residue stretch at 167–241 folds into the POU-specific domain; sequence EEPSDLEELE…LLEKWLNDAE (75 aa). The residue at position 170 (S170) is a Phosphoserine. The segment covering 243–258 has biased composition (low complexity); the sequence is LSSDSTASSPSALNSP. Positions 243–273 are disordered; it reads LSSDSTASSPSALNSPGLGAEGLNRRRKKRT. A DNA-binding region (homeobox) is located at residues 268–327; that stretch reads RRKKRTSIETNIRVALEKSFMENQKPTSEDITLIAEQLNMEKEVIRVWFCNRRQKEKRIN. 2 positions are modified to phosphoserine: S274 and S337. The segment at 385–448 is disordered; the sequence is GTTDSTSNNT…STPLPSPLGA (64 aa). Low complexity predominate over residues 394-441; it reads TATVISTAPPASSAVTSPSLSPSPSASASTSEASSASETSTTQTTSTP.

The protein belongs to the POU transcription factor family. Class-2 subfamily. In terms of assembly, interacts with POU2AF1; the interaction increases POU2F1 transactivation activity. Interacts with NR3C1, AR, PGR and HCFC1. In terms of processing, phosphorylated by PRKDC. Widely expressed.

It localises to the nucleus. Transcription factor that binds to the octamer motif (5'-ATTTGCAT-3') and activates the promoters of the genes for some small nuclear RNAs (snRNA) and of genes such as those for histone H2B and immunoglobulins. Modulates transcription transactivation by NR3C1, AR and PGR. The polypeptide is POU domain, class 2, transcription factor 1 (Pou2f1) (Rattus norvegicus (Rat)).